The following is a 292-amino-acid chain: 11-beta-hydroxysteroid dehydrogenase 1 (292 aa).

At 2–7 (AFMKKY) the chain is on the cytoplasmic side. A helical; Signal-anchor for type II membrane protein membrane pass occupies residues 8–24 (LLPLLGLFLAYYYYSAN). Over 25 to 292 (EEFRPEMLQG…KFDISKLVNN (268 aa)) the chain is Lumenal. NADP(+)-binding positions include 41–67 (GASKGIGKEIAFHLAKMGAHVVVTARS), 92–93 (TM), and 119–121 (NHI). Residues N123 and N162 are each glycosylated (N-linked (GlcNAc...) asparagine). Residue S170 coordinates substrate. Catalysis depends on Y183, which acts as the Proton acceptor. 183 to 187 (YSASK) provides a ligand contact to NADP(+). N-linked (GlcNAc...) asparagine glycosylation is present at N207. An NADP(+)-binding site is contributed by 218-222 (IDTDT).

It belongs to the short-chain dehydrogenases/reductases (SDR) family. As to quaternary structure, homodimer. In terms of processing, glycosylated. Expressed in the eye.

Its subcellular location is the endoplasmic reticulum membrane. The protein localises to the microsome membrane. It carries out the reaction an 11beta-hydroxysteroid + NADP(+) = an 11-oxosteroid + NADPH + H(+). The enzyme catalyses corticosterone + NADP(+) = 11-dehydrocorticosterone + NADPH + H(+). It catalyses the reaction cortisone + NADPH + H(+) = cortisol + NADP(+). The catalysed reaction is a 7beta-hydroxysteroid + NADP(+) = a 7-oxosteroid + NADPH + H(+). It carries out the reaction 7-oxocholesterol + NADPH + H(+) = 7beta-hydroxycholesterol + NADP(+). The enzyme catalyses chenodeoxycholate + NADP(+) = 7-oxolithocholate + NADPH + H(+). It catalyses the reaction 7-oxolithocholate + NADPH + H(+) = ursodeoxycholate + NADP(+). The catalysed reaction is glycochenodeoxycholate + NADP(+) = 7-oxoglycolithocholate + NADPH + H(+). It carries out the reaction taurochenodeoxycholate + NADP(+) = 7-oxotaurolithocholate + NADPH + H(+). The enzyme catalyses tauroursodeoxycholate + NADP(+) = 7-oxotaurolithocholate + NADPH + H(+). It catalyses the reaction glycoursodeoxycholate + NADP(+) = 7-oxoglycolithocholate + NADPH + H(+). The catalysed reaction is 7-oxopregnenolone + NADPH + H(+) = 7beta-hydroxypregnenolone + NADP(+). It carries out the reaction 3beta,7alpha-dihydroxyandrost-5-en-17-one + NADP(+) = 3beta-hydroxy-5-androstene-7,17-dione + NADPH + H(+). The enzyme catalyses 3beta-hydroxy-5-androstene-7,17-dione + NADPH + H(+) = 3beta,7beta-dihydroxyandrost-5-en-17-one + NADP(+). It catalyses the reaction 3beta-hydroxy-5alpha-androstane-7,17-dione + NADPH + H(+) = 3beta,7beta-dihydroxy-5alpha-androstan-17-one + NADP(+). Its pathway is steroid metabolism. Controls the reversible conversion of biologically active glucocorticoids such as cortisone to cortisol, and 11-dehydrocorticosterone to corticosterone in the presence of NADP(H). Participates in the corticosteroid receptor-mediated anti-inflammatory response, as well as metabolic and homeostatic processes. Plays a role in the secretion of aqueous humor in the eye, maintaining a normotensive, intraocular environment. Bidirectional in vitro, predominantly functions as a reductase in vivo, thereby increasing the concentration of active glucocorticoids. It has broad substrate specificity, besides glucocorticoids, it accepts other steroid and sterol substrates. It has broad substrate specificity, besides glucocorticoids, it accepts other steroid and sterol substrates. Interconverts 7-oxo- and 7-hydroxy-neurosteroids such as 7-oxopregnenolone and 7beta-hydroxypregnenolone, 7-oxodehydroepiandrosterone (3beta-hydroxy-5-androstene-7,17-dione) and 7beta-hydroxydehydroepiandrosterone (3beta,7beta-dihydroxyandrost-5-en-17-one), among others. Catalyzes the stereo-specific conversion of the major dietary oxysterol, 7-ketocholesterol (7-oxocholesterol), into the more polar 7-beta-hydroxycholesterol metabolite. 7-oxocholesterol is one of the most important oxysterols, it participates in several events such as induction of apoptosis, accumulation in atherosclerotic lesions, lipid peroxidation, and induction of foam cell formation. Mediates the 7-oxo reduction of 7-oxolithocholate mainly to chenodeoxycholate, and to a lesser extent to ursodeoxycholate, both in its free form and when conjugated to glycine or taurine, providing a link between glucocorticoid activation and bile acid metabolism. Catalyzes the synthesis of 7-beta-25-dihydroxycholesterol from 7-oxo-25-hydroxycholesterol in vitro, which acts as a ligand for the G-protein-coupled receptor (GPCR) Epstein-Barr virus-induced gene 2 (EBI2) and may thereby regulate immune cell migration. The chain is 11-beta-hydroxysteroid dehydrogenase 1 from Oryctolagus cuniculus (Rabbit).